The primary structure comprises 262 residues: Acyl-[acyl-carrier-protein]--UDP-N-acetylglucosamine O-acyltransferase (262 aa).

This sequence belongs to the transferase hexapeptide repeat family. LpxA subfamily. As to quaternary structure, homotrimer.

The protein localises to the cytoplasm. It catalyses the reaction a (3R)-hydroxyacyl-[ACP] + UDP-N-acetyl-alpha-D-glucosamine = a UDP-3-O-[(3R)-3-hydroxyacyl]-N-acetyl-alpha-D-glucosamine + holo-[ACP]. Its pathway is glycolipid biosynthesis; lipid IV(A) biosynthesis; lipid IV(A) from (3R)-3-hydroxytetradecanoyl-[acyl-carrier-protein] and UDP-N-acetyl-alpha-D-glucosamine: step 1/6. Its function is as follows. Involved in the biosynthesis of lipid A, a phosphorylated glycolipid that anchors the lipopolysaccharide to the outer membrane of the cell. This chain is Acyl-[acyl-carrier-protein]--UDP-N-acetylglucosamine O-acyltransferase, found in Yersinia enterocolitica.